The sequence spans 210 residues: Thymidylate kinase (210 aa).

Residue 9–16 (GLEGAGKS) coordinates ATP.

Belongs to the thymidylate kinase family.

It catalyses the reaction dTMP + ATP = dTDP + ADP. Functionally, phosphorylation of dTMP to form dTDP in both de novo and salvage pathways of dTTP synthesis. This is Thymidylate kinase from Aliivibrio fischeri (strain MJ11) (Vibrio fischeri).